A 214-amino-acid chain; its full sequence is MRIILLGAPGAGKGTQAQFIMGKYGIPQISTGDMLRAAVKAGTELGKQAKEIMDAGKLVTDELVIALVKERIAQDDCRNGFLLDGFPRTIPQADAMKDAGIDVDYVIEFAVPDELIIDRIIGRRVHAASGRVYHVKFNPPKVEDKDDVTGEDLSVRKDDQEDTVRKRLVEYHQQTAPLVSYYQKEADAGNTRYFKVEGTRKVEEVRAELETILG.

10–15 (GAGKGT) lines the ATP pocket. The interval 30–59 (STGDMLRAAVKAGTELGKQAKEIMDAGKLV) is NMP. AMP-binding positions include threonine 31, arginine 36, 57-59 (KLV), 85-88 (GFPR), and glutamine 92. The tract at residues 122-159 (GRRVHAASGRVYHVKFNPPKVEDKDDVTGEDLSVRKDD) is LID. ATP contacts are provided by residues arginine 123 and 132–133 (VY). Arginine 156 and arginine 167 together coordinate AMP. Arginine 200 is a binding site for ATP.

It belongs to the adenylate kinase family. Monomer.

Its subcellular location is the cytoplasm. It carries out the reaction AMP + ATP = 2 ADP. Its pathway is purine metabolism; AMP biosynthesis via salvage pathway; AMP from ADP: step 1/1. Catalyzes the reversible transfer of the terminal phosphate group between ATP and AMP. Plays an important role in cellular energy homeostasis and in adenine nucleotide metabolism. The polypeptide is Adenylate kinase (Pectobacterium atrosepticum (strain SCRI 1043 / ATCC BAA-672) (Erwinia carotovora subsp. atroseptica)).